The sequence spans 130 residues: Small ribosomal subunit protein uS11 (130 aa).

The protein belongs to the universal ribosomal protein uS11 family. Part of the 30S ribosomal subunit. Interacts with proteins S7 and S18. Binds to IF-3.

Located on the platform of the 30S subunit, it bridges several disparate RNA helices of the 16S rRNA. Forms part of the Shine-Dalgarno cleft in the 70S ribosome. In Blochmanniella floridana, this protein is Small ribosomal subunit protein uS11.